We begin with the raw amino-acid sequence, 210 residues long: Cdc42 effector protein 2 (210 aa).

Serine 2 carries the post-translational modification N-acetylserine. The 15-residue stretch at 30–44 folds into the CRIB domain; that stretch reads ISPPLGDFRHTIHIG. Residues serine 31, serine 101, and serine 141 each carry the phosphoserine modification. The disordered stretch occupies residues 122-171; that stretch reads PTAQAPPKPPRLHLETPQPSPQEGGSVDIWRIPETGSPNSGLTPESGAEE.

The protein belongs to the BORG/CEP family. Interacts with RHOQ and CDC42 in a GTP-dependent manner, and with SEPT7. As to expression, highly expressed in the heart. Weakly expressed in the pancreas and liver.

The protein localises to the endomembrane system. It localises to the cytoplasm. Its subcellular location is the cytoskeleton. In terms of biological role, probably involved in the organization of the actin cytoskeleton. May act downstream of CDC42 to induce actin filament assembly leading to cell shape changes. Induces pseudopodia formation in fibroblasts in a CDC42-dependent manner. This Homo sapiens (Human) protein is Cdc42 effector protein 2 (CDC42EP2).